We begin with the raw amino-acid sequence, 31 residues long: Cytochrome b6-f complex subunit 6 (31 aa).

Residues 4–26 (LTSYFGFLLAASTITPALFIGLN) traverse the membrane as a helical segment.

Belongs to the PetL family. The 4 large subunits of the cytochrome b6-f complex are cytochrome b6, subunit IV (17 kDa polypeptide, PetD), cytochrome f and the Rieske protein, while the 4 small subunits are PetG, PetL, PetM and PetN. The complex functions as a dimer.

It is found in the plastid. Its subcellular location is the chloroplast thylakoid membrane. Functionally, component of the cytochrome b6-f complex, which mediates electron transfer between photosystem II (PSII) and photosystem I (PSI), cyclic electron flow around PSI, and state transitions. PetL is important for photoautotrophic growth as well as for electron transfer efficiency and stability of the cytochrome b6-f complex. In Phalaenopsis aphrodite subsp. formosana (Moth orchid), this protein is Cytochrome b6-f complex subunit 6.